A 1413-amino-acid chain; its full sequence is DNA-directed RNA polymerase subunit beta' (1413 aa).

Positions 70, 72, 85, and 88 each coordinate Zn(2+). Residues Asp-461, Asp-463, and Asp-465 each coordinate Mg(2+). Zn(2+) contacts are provided by Cys-820, Cys-894, Cys-901, and Cys-904.

Belongs to the RNA polymerase beta' chain family. As to quaternary structure, the RNAP catalytic core consists of 2 alpha, 1 beta, 1 beta' and 1 omega subunit. When a sigma factor is associated with the core the holoenzyme is formed, which can initiate transcription. The cofactor is Mg(2+). Requires Zn(2+) as cofactor.

It carries out the reaction RNA(n) + a ribonucleoside 5'-triphosphate = RNA(n+1) + diphosphate. Functionally, DNA-dependent RNA polymerase catalyzes the transcription of DNA into RNA using the four ribonucleoside triphosphates as substrates. The chain is DNA-directed RNA polymerase subunit beta' from Cupriavidus metallidurans (strain ATCC 43123 / DSM 2839 / NBRC 102507 / CH34) (Ralstonia metallidurans).